The sequence spans 648 residues: MTNFDSKKLNKHWTIEDSISTYGIDKWGDQYFSINSLGNISITPNRNSKKTIDLFKLVNEIKSREINTPLILRFNDILKDRITELNNAFSQAIETYNYKNIFQGVFPIKCNQQKNVLEKIIEYGDYWDFGLEVGSKSELLIGLSLLENKKSLLICNGYKDKKYIEIAILARKLGKQPIIVIEQIDEVQRIIEAVKNLRSTPILGIRSKLSSKSSGRWGKSVGDNSKFGLSIPEIMLTIKELKEASLINEMKLLHFHIGSQISDISVIKDALQEASQIFVELSKLGAPMKYIDVGGGLGIDFDGTKTSSNTSTNYSLQNYANDVVATIKDSCEVNNIQHPIIISESGRAIVSHCSVLIFDVLGTSHVSSQIKVSHQKKTSLIIKNLIDTHNQLKNLRNKKEDLSEIIELWNDAKKFKKDCLVAFRLGFISLGERAYAEELTWACAKEISSHLDNEKIIHPDLSEITETLSSTYYANLSVFKSIPDTWAINQIFPIIPIHRHLEEPICKGNFADLTCDSDGKLNNFIDNGKIKSLLNLHRPEENNDYLIGIFMAGAYQEALGNFHNLFGNTNVIHIDINEDNTYKIKNIIKENSKSEILELLDYSSDNLVESIRINTEFAINNKTLSIEEARKLIDQIETSLRKSSYLSE.

Lysine 109 carries the N6-(pyridoxal phosphate)lysine modification. 291 to 301 serves as a coordination point for substrate; that stretch reads IDVGGGLGIDF.

Belongs to the Orn/Lys/Arg decarboxylase class-II family. SpeA subfamily. The cofactor is Mg(2+). Pyridoxal 5'-phosphate serves as cofactor.

It catalyses the reaction L-arginine + H(+) = agmatine + CO2. It functions in the pathway amine and polyamine biosynthesis; agmatine biosynthesis; agmatine from L-arginine: step 1/1. Its function is as follows. Catalyzes the biosynthesis of agmatine from arginine. The protein is Biosynthetic arginine decarboxylase of Prochlorococcus marinus (strain MIT 9515).